The chain runs to 706 residues: G2/M phase-specific E3 ubiquitin-protein ligase (706 aa).

Residues 11-51 form a C2HC pre-PHD-type zinc finger; it reads NLACVFCRKNDDCPNKYGEKKTKEKWNLTVHYYCLLMSSGI. The PHD-type 1 zinc-finger motif lies at 79 to 128; it reads LKCCVCKKNGASIGCVAPRCKRSYHFPCGLQRECIFQFTGNFASFCWNHR. Residues 143-193 form a PHD-type 2; degenerate zinc finger; that stretch reads PCTICLEFIEPIPSYNILRSPCCKNAWFHRDCLQVQAINAGVFFFRCTICS. The segment at 237-286 adopts a PHD-type 3 zinc-finger fold; the sequence is RCRCKEGRDYNAPDSKWEIKRCQCCGSSGTHLACSSLRSWEQNWECLECR. In terms of domain architecture, HECT spans 371–698; it reads IWTSALDAFR…IRNTLKLEKE (328 aa).

The protein resides in the nucleus. Its subcellular location is the nucleolus. It is found in the cytoplasm. The catalysed reaction is S-ubiquitinyl-[E2 ubiquitin-conjugating enzyme]-L-cysteine + [acceptor protein]-L-lysine = [E2 ubiquitin-conjugating enzyme]-L-cysteine + N(6)-ubiquitinyl-[acceptor protein]-L-lysine.. It participates in protein modification; protein ubiquitination. Its function is as follows. E3 ubiquitin-protein ligase which accepts ubiquitin from an E2 ubiquitin-conjugating enzyme in the form of a thioester and then directly transfers the ubiquitin to targeted substrates. Essential in early embryonic development to prevent apoptotic death. In Macaca fascicularis (Crab-eating macaque), this protein is G2/M phase-specific E3 ubiquitin-protein ligase (G2E3).